Reading from the N-terminus, the 245-residue chain is Ribonuclease 3 (245 aa).

In terms of domain architecture, RNase III spans 18–146 (LSEFLENLSI…FVGAIYLDSG (129 aa)). A Mg(2+)-binding site is contributed by E59. The active site involves D63. 2 residues coordinate Mg(2+): D132 and E135. E135 is an active-site residue. The DRBM domain occupies 173-242 (DYKSLLQEYV…AEVALKAMED (70 aa)).

This sequence belongs to the ribonuclease III family. Homodimer. Mg(2+) serves as cofactor.

It localises to the cytoplasm. The catalysed reaction is Endonucleolytic cleavage to 5'-phosphomonoester.. In terms of biological role, digests double-stranded RNA. Involved in the processing of primary rRNA transcript to yield the immediate precursors to the large and small rRNAs (23S and 16S). Processes some mRNAs, and tRNAs when they are encoded in the rRNA operon. Processes pre-crRNA and tracrRNA of type II CRISPR loci if present in the organism. The protein is Ribonuclease 3 of Borreliella afzelii (strain PKo) (Borrelia afzelii).